The chain runs to 210 residues: CASP-like protein 3A2 (210 aa).

The Cytoplasmic segment spans residues 1–45 (MMMNGQKMAAAEVAVQLPESKMVTENIGGAAAAMRPFGRKAEVMN). Residues 46–66 (VLLRVLCMVTSVAALSSMVTA) traverse the membrane as a helical segment. At 67–92 (QQSSTVSIYGFMLPIQSKWSFSHSFE) the chain is on the extracellular side. Residues 93–113 (YVVGVSAVVAAHSLLQLLISV) traverse the membrane as a helical segment. The Cytoplasmic segment spans residues 114–128 (SRLLRKSPVIQSRSH). The helical transmembrane segment at 129–149 (AWLVFAGDQVFAYAMISAGAA) threads the bilayer. Residues 150-178 (ASGVTNLNRTGIRHTALPNFCKPLQSFCD) are Extracellular-facing. A glycan (N-linked (GlcNAc...) asparagine) is linked at Asn157. A helical membrane pass occupies residues 179-199 (HVAVSIFFTFLSCFLLAASAV). Over 200–210 (QEVIWLSRSKY) the chain is Cytoplasmic.

It belongs to the Casparian strip membrane proteins (CASP) family. In terms of assembly, homodimer and heterodimers.

It localises to the cell membrane. The protein is CASP-like protein 3A2 of Populus trichocarpa (Western balsam poplar).